Consider the following 558-residue polypeptide: Germacrene A synthase short form (558 aa).

Residues Asp311, Asp315, Asp455, Thr459, and Glu463 each coordinate Mg(2+). A DDXXD motif motif is present at residues 311 to 315; it reads DDTYD.

The protein belongs to the terpene synthase family. The cofactor is Mg(2+). In terms of tissue distribution, expressed in roots and in green and etiolated seedlings.

It catalyses the reaction (2E,6E)-farnesyl diphosphate = (+)-(R)-germacrene A + diphosphate. The protein operates within secondary metabolite biosynthesis; terpenoid biosynthesis. Involved in sesquiterpene lactone biosynthesis. Produces exclusively (+)-germacrene A. The sequence is that of Germacrene A synthase short form from Cichorium intybus (Chicory).